Here is a 313-residue protein sequence, read N- to C-terminus: Solute carrier family 35 member E3 (313 aa).

10 consecutive transmembrane segments (helical) span residues 17–37, 40–60, 77–97, 100–120, 130–147, 153–173, 187–206, 225–245, 252–272, and 275–295; these read GLLLNLLVSICIVFLNKWIYV, GFPNMSLTLVHFVVTWLGLYV, LLLLALSFCGFVVFTNLSLQN, IGTYQLAKAMTTPVIIVIQTL, IRLTLIPITLGVILNSYY, FLGTVFAALGVLVTSLYQVWV, LLYYQAPMSSAMLLVAVPFF, LMVLLSGVIAFMVNLSIYWII, TYNMFGHFKFCITLFGGYVLF, and PLSINQGLGMLCTLFGILAYT.

The protein belongs to the TPT transporter family. SLC35E subfamily.

The protein resides in the membrane. In terms of biological role, putative transporter. This Bos taurus (Bovine) protein is Solute carrier family 35 member E3 (SLC35E3).